A 161-amino-acid chain; its full sequence is Putative defense protein 2 (161 aa).

The signal sequence occupies residues 1 to 11; sequence LSWSALALTSA. Residues 12–161 enclose the Reelin domain; that stretch reads YPTGAPTSAC…SAPVKILSHH (150 aa). Cysteine 21 and cysteine 98 are joined by a disulfide. An N-linked (GlcNAc...) asparagine glycan is attached at asparagine 91.

It belongs to the insect defense protein family.

It is found in the secreted. In terms of biological role, may have antimicrobial activity. This Antheraea mylitta (Tasar silkworm) protein is Putative defense protein 2.